We begin with the raw amino-acid sequence, 277 residues long: Large ribosomal subunit protein uL2 (277 aa).

The interval 222-258 (GSVMNPCDHPHGGGEGRSPIGRPSPVTPWGKPALGYK) is disordered.

Belongs to the universal ribosomal protein uL2 family. Part of the 50S ribosomal subunit. Forms a bridge to the 30S subunit in the 70S ribosome.

Its function is as follows. One of the primary rRNA binding proteins. Required for association of the 30S and 50S subunits to form the 70S ribosome, for tRNA binding and peptide bond formation. It has been suggested to have peptidyltransferase activity; this is somewhat controversial. Makes several contacts with the 16S rRNA in the 70S ribosome. The chain is Large ribosomal subunit protein uL2 from Clostridium perfringens (strain 13 / Type A).